The primary structure comprises 216 residues: MSKIQLVAEAKLPTEFGIFRIVGFEFPDTQKEHVALVMGDINDDKPVLARIHSECLTGDALHSLKCDCGFQLATALRQISEAGRGVLIYHREEGRGIGLINKIRAYALQDQGLDTIEANLALGFAADERNFSVCADIFALLGVKQVRLLTNNPNKIETMKKSGINIVERVPLNVGENRYNTEYLDTKAKKMGHFIVHNNEQHLIACPHCQEEIPKK.

Position 50 to 54 (50 to 54 (RIHSE)) interacts with GTP. Residues C55, C66, and C68 each coordinate Zn(2+). Residues Q71, 93 to 95 (EGR), and T115 contribute to the GTP site. Residue D127 is the Proton acceptor of the active site. R129 acts as the Nucleophile in catalysis. GTP is bound by residues T150 and K155.

This sequence belongs to the GTP cyclohydrolase II family. The cofactor is Zn(2+).

It catalyses the reaction GTP + 4 H2O = 2,5-diamino-6-hydroxy-4-(5-phosphoribosylamino)-pyrimidine + formate + 2 phosphate + 3 H(+). Its pathway is cofactor biosynthesis; riboflavin biosynthesis; 5-amino-6-(D-ribitylamino)uracil from GTP: step 1/4. Catalyzes the conversion of GTP to 2,5-diamino-6-ribosylamino-4(3H)-pyrimidinone 5'-phosphate (DARP), formate and pyrophosphate. In Histophilus somni (strain 129Pt) (Haemophilus somnus), this protein is GTP cyclohydrolase-2.